A 241-amino-acid polypeptide reads, in one-letter code: Synaptogyrin (241 aa).

An MARVEL domain is found at 30 to 179; it reads FAMKPQVVIR…CALMAYKRFL (150 aa). 4 helical membrane-spanning segments follow: residues 34-54, 81-101, 115-135, and 155-175; these read PQVVIRALCWLFSVVVFGCIS, MVGVFGFLASMGFMGGEFLFE, ADMGFSALWTFMYFVAFLYLW, and TAIWFCLFSIVSWALCALMAY. The interval 216-241 is disordered; the sequence is ASPFGQPQQGGMEQQQSGMEYQQPTY. Low complexity predominate over residues 220–241; sequence GQPQQGGMEQQQSGMEYQQPTY.

This sequence belongs to the synaptogyrin family.

The protein localises to the cytoplasmic vesicle membrane. The protein resides in the cytoplasmic vesicle. It localises to the secretory vesicle membrane. It is found in the secretory vesicle. Its subcellular location is the synaptic vesicle membrane. Required for the correct formation of synaptic vesicles at nerve terminals and has a role in the regulation of the synaptic vesicle exo-endocytic cycle. This is Synaptogyrin from Drosophila melanogaster (Fruit fly).